A 253-amino-acid polypeptide reads, in one-letter code: 5-oxoprolinase subunit A (253 aa).

It belongs to the LamB/PxpA family. Forms a complex composed of PxpA, PxpB and PxpC.

It catalyses the reaction 5-oxo-L-proline + ATP + 2 H2O = L-glutamate + ADP + phosphate + H(+). In terms of biological role, catalyzes the cleavage of 5-oxoproline to form L-glutamate coupled to the hydrolysis of ATP to ADP and inorganic phosphate. The protein is 5-oxoprolinase subunit A of Bacillus anthracis (strain A0248).